The primary structure comprises 128 residues: Transmembrane protein 234 homolog (128 aa).

4 consecutive transmembrane segments (helical) span residues 3 to 23 (TYNI…NPLI), 53 to 73 (PSYT…FYTL), 80 to 100 (LVVP…GMLL), and 104 to 124 (VLHF…TICV).

This sequence belongs to the TMEM234 family.

The protein localises to the membrane. The polypeptide is Transmembrane protein 234 homolog (Dictyostelium discoideum (Social amoeba)).